Reading from the N-terminus, the 122-residue chain is MIQQESQLKVADNTGAKKVKCFKVLGGSRRRYATVGDVIVCSVRDVEPDSSVKKGDVVKAVIVRTRNDIHRKDGSTLRFDTNSCVIIDDKGNPKGTRIFGPIAREIRDRGFVKISSLAPEVI.

This sequence belongs to the universal ribosomal protein uL14 family. As to quaternary structure, part of the 50S ribosomal subunit. Forms a cluster with proteins L3 and L19. In the 70S ribosome, L14 and L19 interact and together make contacts with the 16S rRNA in bridges B5 and B8.

Binds to 23S rRNA. Forms part of two intersubunit bridges in the 70S ribosome. This chain is Large ribosomal subunit protein uL14, found in Chlamydia trachomatis serovar A (strain ATCC VR-571B / DSM 19440 / HAR-13).